A 506-amino-acid chain; its full sequence is GTPase Der (506 aa).

EngA-type G domains are found at residues 3–166 and 218–391; these read PVVA…GEQL and IKIA…ACAT. Residues 9–16, 56–60, 118–121, 224–231, 271–275, and 336–339 each bind GTP; these read GRPNVGKS, DTGGI, NKTD, DTAGV, and NKWD. One can recognise a KH-like domain in the interval 392–476; the sequence is QKTSTSMLTR…PIRIQFQEGN (85 aa).

Belongs to the TRAFAC class TrmE-Era-EngA-EngB-Septin-like GTPase superfamily. EngA (Der) GTPase family. As to quaternary structure, associates with the 50S ribosomal subunit.

GTPase that plays an essential role in the late steps of ribosome biogenesis. The sequence is that of GTPase Der from Actinobacillus pleuropneumoniae serotype 5b (strain L20).